The chain runs to 452 residues: Transcription factor PERIANTHIA (452 aa).

Residues aspartate 164–leucine 227 form the bZIP domain. The tract at residues arginine 166–lysine 186 is basic motif. The tract at residues leucine 192–leucine 206 is leucine-zipper. The DOG1 domain occupies valine 233–arginine 449.

The protein belongs to the bZIP family. Interacts with GRXC7/ROXY1. Interacts with BOP1 and BOP2.

The protein resides in the nucleus. Its function is as follows. Transcriptional activator involved in the determination of floral organ number. Acts to determine floral organ patterning by establishing floral organ primordia in specific numbers and positions. Plays a role in regulating stem cell fate by directly controlling AG expression. Binds to the 5'-AAGAAT-3' cis-acting element found in AG promoter. Might represent a target for a post-translational modification by GRXC7/ROXY1. The sequence is that of Transcription factor PERIANTHIA (PAN) from Arabidopsis thaliana (Mouse-ear cress).